A 306-amino-acid polypeptide reads, in one-letter code: Mitochondrial brown fat uncoupling protein 1 (306 aa).

The Mitochondrial intermembrane portion of the chain corresponds to 1–10 (MVGTTTTDVP). A helical transmembrane segment spans residues 11–32 (PTMGVKIFSAGVAACLADVITF). Solcar repeat units follow at residues 11–102 (PTMG…VQEF), 110–200 (PSLG…MKGA), and 209–294 (DDVP…LKGE). Residues 33–73 (PLDTAKVRQQIQGEFPITSGIRYKGVLGTITTLAKTEGPLK) lie on the Mitochondrial matrix side of the membrane. Residue Lys56 coordinates fatty acid 16:0. A helical transmembrane segment spans residues 74-96 (LYSGLPAGLQRQISFASLRIGLY). The Mitochondrial intermembrane segment spans residues 97–115 (DTVQEFFTSGEETPSLGSK). A helical membrane pass occupies residues 116-132 (ISAGLTTGGVAVFIGQP). Residues 133–177 (TEVVKVRLQAQSHLHGLKPRYTGTYNAYRIIATTESLTSLWKGTT) lie on the Mitochondrial matrix side of the membrane. A helical membrane pass occupies residues 178–194 (PNLLRNVIINCTELVTY). The Mitochondrial intermembrane segment spans residues 195 to 211 (DLMKGALVRNEILADDV). The helical transmembrane segment at 212-231 (PCHFVSALIAGFCTTLLSSP) threads the bilayer. At 232 to 265 (VDVVKTRFINSPPGQYASVPNCAMTMFTKEGPTA) the chain is on the mitochondrial matrix side. Position 253 is a cysteine sulfenic acid (-SOH) (Cys253). The helical transmembrane segment at 266 to 288 (FFKGFVPSFLRLGSWNVIMFVCF) threads the bilayer. Lys268 contacts fatty acid 16:0. Residues 289-306 (EKLKGELMRSRQTVDCAT) are Mitochondrial intermembrane-facing.

Belongs to the mitochondrial carrier (TC 2.A.29) family. In terms of assembly, most probably functions as a monomer. Binds one purine nucleotide per monomer. However, has also been suggested to function as a homodimer or a homotetramer. Tightly associates with cardiolipin in the mitochondrion inner membrane; may stabilize and regulate its activity. Post-translationally, may undergo sulfenylation upon cold exposure. May increase the sensitivity of UCP1 thermogenic function to the activation by noradrenaline probably through structural effects. In terms of processing, may undergo ubiquitin-mediated proteasomal degradation. As to expression, brown adipose tissue.

The protein localises to the mitochondrion inner membrane. The enzyme catalyses H(+)(in) = H(+)(out). Its activity is regulated as follows. Has no constitutive proton transporter activity and has to be activated by long-chain fatty acids/LCFAs. Inhibited by purine nucleotides. Both purine nucleotides and LCFAs bind the cytosolic side of the transporter and directly compete to activate or inhibit it. Activated by noradrenaline and reactive oxygen species. Despite lacking canonical translational encoding for selenocysteine, a small pool of the protein has been observed to selectively incorporate selenocysteine at 'Cys-253'. Selenocysteine-modified protein is highly sensitive to redox modification and may constitute a pool of protein highly sensitive to activation by elevated levels of reactive oxygen species (ROS). Mitochondrial protein responsible for thermogenic respiration, a specialized capacity of brown adipose tissue and beige fat that participates in non-shivering adaptive thermogenesis to temperature and diet variations and more generally to the regulation of energy balance. Functions as a long-chain fatty acid/LCFA and proton symporter, simultaneously transporting one LCFA and one proton through the inner mitochondrial membrane. However, LCFAs remaining associated with the transporter via their hydrophobic tails, it results in an apparent transport of protons activated by LCFAs. Thereby, dissipates the mitochondrial proton gradient and converts the energy of substrate oxydation into heat instead of ATP. Regulates the production of reactive oxygen species/ROS by mitochondria. The chain is Mitochondrial brown fat uncoupling protein 1 from Oryctolagus cuniculus (Rabbit).